Consider the following 72-residue polypeptide: Conotoxin Ep11.1 (72 aa).

The first 19 residues, 1-19 (MKLCVTFLLILVILPSVTG), serve as a signal peptide directing secretion. The propeptide occupies 20 to 32 (EKSSKRTLSGAAL). Intrachain disulfides connect C39–C53, C46–C58, C52–C63, and C57–C70.

Belongs to the conotoxin I1 superfamily. In terms of tissue distribution, expressed by the venom duct.

The protein localises to the secreted. The sequence is that of Conotoxin Ep11.1 from Conus episcopatus (Bishop's cone).